The following is a 157-amino-acid chain: Ribonuclease H (157 aa).

Residues 5 to 146 (IMKQVEIFTD…CDDLARTAAE (142 aa)) enclose the RNase H type-1 domain. Mg(2+)-binding residues include Asp-14, Glu-52, Asp-74, and Asp-138.

It belongs to the RNase H family. In terms of assembly, monomer. It depends on Mg(2+) as a cofactor.

The protein resides in the cytoplasm. The catalysed reaction is Endonucleolytic cleavage to 5'-phosphomonoester.. In terms of biological role, endonuclease that specifically degrades the RNA of RNA-DNA hybrids. This chain is Ribonuclease H, found in Aliivibrio salmonicida (strain LFI1238) (Vibrio salmonicida (strain LFI1238)).